We begin with the raw amino-acid sequence, 214 residues long: ATP phosphoribosyltransferase (214 aa).

It belongs to the ATP phosphoribosyltransferase family. Short subfamily. Heteromultimer composed of HisG and HisZ subunits.

Its subcellular location is the cytoplasm. It carries out the reaction 1-(5-phospho-beta-D-ribosyl)-ATP + diphosphate = 5-phospho-alpha-D-ribose 1-diphosphate + ATP. It participates in amino-acid biosynthesis; L-histidine biosynthesis; L-histidine from 5-phospho-alpha-D-ribose 1-diphosphate: step 1/9. Catalyzes the condensation of ATP and 5-phosphoribose 1-diphosphate to form N'-(5'-phosphoribosyl)-ATP (PR-ATP). Has a crucial role in the pathway because the rate of histidine biosynthesis seems to be controlled primarily by regulation of HisG enzymatic activity. This chain is ATP phosphoribosyltransferase, found in Marinomonas sp. (strain MWYL1).